Consider the following 235-residue polypeptide: 7-cyano-7-deazaguanine synthase (235 aa).

Residue Cys7–Ala17 coordinates ATP. Residues Cys185, Cys193, Cys196, and Cys199 each coordinate Zn(2+).

It belongs to the QueC family. The cofactor is Zn(2+).

It catalyses the reaction 7-carboxy-7-deazaguanine + NH4(+) + ATP = 7-cyano-7-deazaguanine + ADP + phosphate + H2O + H(+). The protein operates within purine metabolism; 7-cyano-7-deazaguanine biosynthesis. In terms of biological role, catalyzes the ATP-dependent conversion of 7-carboxy-7-deazaguanine (CDG) to 7-cyano-7-deazaguanine (preQ(0)). This Allorhizobium ampelinum (strain ATCC BAA-846 / DSM 112012 / S4) (Agrobacterium vitis (strain S4)) protein is 7-cyano-7-deazaguanine synthase.